The primary structure comprises 650 residues: Probable ATP-dependent RNA helicase DDX17 (650 aa).

Residues 1-38 (MRGGGFGDRDRDRDRGGFGARGGSGLPPKKFGNPGERL) form a disordered region. A compositionally biased stretch (basic and acidic residues) spans 7–16 (GDRDRDRDRG). K29, K30, and K42 each carry N6-acetyllysine. K50 is covalently cross-linked (Glycyl lysine isopeptide (Lys-Gly) (interchain with G-Cter in SUMO); alternate). K50 is covalently cross-linked (Glycyl lysine isopeptide (Lys-Gly) (interchain with G-Cter in SUMO1); alternate). A Glycyl lysine isopeptide (Lys-Gly) (interchain with G-Cter in SUMO2); alternate cross-link involves residue K50. A Q motif motif is present at residues 92-120 (FAFHHANFPQYVMDVLMDQHFTEPTPIQC). In terms of domain architecture, Helicase ATP-binding spans 123-298 (FPLALSGRDM…EDFLRDYTQI (176 aa)). Position 136–143 (136–143 (AQTGSGKT)) interacts with ATP. Residues 246-249 (DEAD) carry the DEAD box motif. Residues 326–473 (KLIQLMEEIM…AINPKLMQLV (148 aa)) enclose the Helicase C-terminal domain. T444 carries the post-translational modification Phosphothreonine. K449 is covalently cross-linked (Glycyl lysine isopeptide (Lys-Gly) (interchain with G-Cter in SUMO2)). Residues 468–650 (KLMQLVDHRG…PPPPPPPSRK (183 aa)) are transactivation domain. 2 disordered regions span residues 472–543 (LVDH…YGSP) and 583–650 (ASST…PSRK). Polar residues predominate over residues 489-499 (RTTSSANNPNL). The segment covering 504–531 (ECDRRLRGVKDGGRRDSTSYRDRSETDR) has biased composition (basic and acidic residues). The span at 583 to 609 (ASSTASAGRSSQSSSQQFSGIGRSGQQ) shows a compositional bias: low complexity. R605 bears the Omega-N-methylarginine mark. Residues 610 to 619 (PQPLMSQQFA) are compositionally biased toward polar residues. The segment covering 638–650 (YPPPPPPPPPSRK) has biased composition (pro residues). Residues 639–647 (PPPPPPPPP) are interaction with YAP1.

Belongs to the DEAD box helicase family. DDX5/DBP2 subfamily. Interacts with DDX5 in an RNA-independent manner. Interacts with CDK9 transcription elongation complex under basal conditions. Following cell stimulation with poly(I:C), a synthetic double-stranded RNA mimicking viral infection, the interaction with CDK9 is decreased. Interacts with ESR1 in an estrogen-independent manner. Interacts with HNRNPH1; this interaction is important for the regulation of alternative splicing on G-quadruplex structures. At high, but not low, cell density, interacts with DROSHA and DGCR8, the core components of the microprocessor complex involved in the maturation of primary microRNAs (pri-miRNAs) into pre-miRNAs. The interaction with DGCR8 is reduced during mitosis. At low, but not high, cell density, interacts with YAP1 and with its paralog, WWTR1/TAZ. Interactions with DROSHA and YAP1 are mutually exclusive. In vitro, the pre-miRNA processing activity of the DDX17-containing microprocessor complex is weaker than that of the DROSHA/DGCR8 microprocessor complex. Interacts with UPF3B. Interacts with NFAT5; this interaction leads to DDX17 recruitment to LNC2 and S100A4 promoters and NFAT5-mediated DDX17-enhanced transactivation. Interacts with HDAC1, HDAC2 and HDAC3; this interaction with HDAC1 and HDAC3, but not HDAC2, depends upon DDX17 acetylation. Interacts with ZC3HAV1 (via N-terminal domain) in an RNA-independent manner. Interacts with EXOSC3/RRP40 and EXOSC5/RRP46; this interaction may be indirect and mediated by ZC3HAV1-binding. Interacts with EP300; this interaction leads to acetylation at lysine residues. Interacts with CREBBP/CBP and KAT2B/P/CAF. Directly interacts with CTNNB1. Interacts with MYOD1. Interacts with TP53. Interacts with DCP1A in an RNA-independent manner. Interacts with DCP2 in an RNA-dependent manner. Interacts with DHX36; this interaction occurs in a RNA-dependent manner. Interacts with ERCC6. Post-translationally, sumoylation significantly increases stability. It also promotes interaction specifically with HDAC1 (but not HDAC2, nor HDAC3) and strongly stimulates ESR1 and TP53 coactivation. Acetylation at lysine residues stabilizes the protein, stimulates interaction with HDAC1 and HDAC3, but not HDAC2, and represses ESR1 and TP53 coactivation activity.

The protein localises to the nucleus. The protein resides in the nucleolus. It is found in the cytoplasm. Its subcellular location is the cytosol. It carries out the reaction ATP + H2O = ADP + phosphate + H(+). Its function is as follows. As an RNA helicase, unwinds RNA and alters RNA structures through ATP binding and hydrolysis. Involved in multiple cellular processes, including pre-mRNA splicing, alternative splicing, ribosomal RNA processing and miRNA processing, as well as transcription regulation. Regulates the alternative splicing of exons exhibiting specific features. This function requires the RNA helicase activity. Affects NFAT5 and histone macro-H2A.1/MACROH2A1 alternative splicing in a CDK9-dependent manner. Affects splicing of mediators of steroid hormone signaling pathway, including kinases that phosphorylates ESR1 and transcriptional regulators. By acting splicing of regulatory factors, participates in ESR1 and AR stabilization. Promotes the inclusion of specific AC-rich alternative exons in CD44 transcripts. In myoblasts and epithelial cells, cooperates with HNRNPH1 to control the splicing of specific subsets of exons. In addition to binding mature mRNAs, also interacts with certain pri-microRNAs, including MIR132/miR-132, and stabilizes the primary transcript. Also participates in the MIR132 processing, resulting in significantly higher levels of mature MIR132 than MIR212 despite the fact that both are cotranscribed and co-regulated. Binding of pri-microRNAs may occur on the 3' segment flanking the stem loop via the 5'-[ACG]CAUC[ACU]-3' consensus sequence. Participates in MYC down-regulation at high cell density through the production of MYC-targeting microRNAs. Along with DDX5, may be involved in the processing of the 32S intermediate into the mature 28S rRNA. Promoter-specific transcription regulator, functioning as a coactivator or corepressor depending on the context of the promoter and the transcriptional complex in which it exists. Enhances NFAT5 transcriptional activity. Synergizes with TP53 in the activation of the MDM2 promoter; this activity requires acetylation on lysine residues. May also coactivate MDM2 transcription through a TP53-independent pathway. Coactivates MMP7 transcription. Along with CTNNB1, coactivates MYC, JUN, FOSL1 and cyclin D1/CCND1 transcription. Alone or in combination with DDX5 and/or SRA1 non-coding RNA, plays a critical role in promoting the assembly of proteins required for the formation of the transcription initiation complex and chromatin remodeling leading to coactivation of MYOD1-dependent transcription. This helicase-independent activity is required for skeletal muscle cells to properly differentiate into myotubes. During epithelial-to-mesenchymal transition, coregulates SMAD-dependent transcriptional activity, directly controlling key effectors of differentiation, including miRNAs which in turn directly repress its expression. Plays a role in estrogen and testosterone signaling pathway at several levels. Mediates the use of alternative promoters in estrogen-responsive genes and regulates transcription and splicing of a large number of steroid hormone target genes. Contrary to the splicing regulation activity, transcriptional coregulation of the estrogen receptor ESR1 is helicase activity-independent. Plays a role in innate immunity. Specifically restricts bunyavirus infection, including Rift Valley fever virus (RVFV) or La Crosse virus (LACV), but not vesicular stomatitis virus (VSV), in an interferon- and DROSHA-independent manner. Binds to RVFV RNA, likely via structured viral RNA elements. Promotes mRNA degradation mediated by the antiviral zinc-finger protein ZC3HAV1, in an ATPase-dependent manner. The protein is Probable ATP-dependent RNA helicase DDX17 (Ddx17) of Mus musculus (Mouse).